Consider the following 275-residue polypeptide: Rhamnulose-1-phosphate aldolase (275 aa).

Glu-117 is an active-site residue. Positions 141, 143, and 212 each coordinate Zn(2+).

Belongs to the aldolase class II family. RhaD subfamily. In terms of assembly, homotetramer. Zn(2+) is required as a cofactor.

Its subcellular location is the cytoplasm. The enzyme catalyses L-rhamnulose 1-phosphate = (S)-lactaldehyde + dihydroxyacetone phosphate. It functions in the pathway carbohydrate degradation; L-rhamnose degradation; glycerone phosphate from L-rhamnose: step 3/3. Catalyzes the reversible cleavage of L-rhamnulose-1-phosphate to dihydroxyacetone phosphate (DHAP) and L-lactaldehyde. This chain is Rhamnulose-1-phosphate aldolase, found in Salmonella dublin (strain CT_02021853).